The sequence spans 1488 residues: Chromosome partition protein MukB (1488 aa).

An ATP-binding site is contributed by 34 to 41 (GGNGAGKS). Coiled coils occupy residues 326–418 (LEAD…QYNQ), 444–472 (LDTF…QTAH), and 509–602 (RHLA…QRAP). The segment at 666–783 (PGGAEDQRLN…SLPIFGRAAR (118 aa)) is flexible hinge. Coiled-coil stretches lie at residues 835–923 (EAEI…AKLE), 977–1116 (EMLS…AKAG), and 1209–1265 (VEAI…LQSV). Residues 1049 to 1074 (ADSGAEERARQRRDELHAQLSNNRSR) form a disordered region. The span at 1051–1065 (SGAEERARQRRDELH) shows a compositional bias: basic and acidic residues.

This sequence belongs to the SMC family. MukB subfamily. Homodimerization via its hinge domain. Binds to DNA via its C-terminal region. Interacts, and probably forms a ternary complex, with MukE and MukF via its C-terminal region. The complex formation is stimulated by calcium or magnesium. Interacts with tubulin-related protein FtsZ.

The protein localises to the cytoplasm. The protein resides in the nucleoid. Its function is as follows. Plays a central role in chromosome condensation, segregation and cell cycle progression. Functions as a homodimer, which is essential for chromosome partition. Involved in negative DNA supercoiling in vivo, and by this means organize and compact chromosomes. May achieve or facilitate chromosome segregation by condensation DNA from both sides of a centrally located replisome during cell division. The chain is Chromosome partition protein MukB from Salmonella enteritidis PT4 (strain P125109).